A 379-amino-acid polypeptide reads, in one-letter code: Protein RecA (379 aa).

The tract at residues 1–24 is disordered; it reads MSVDVKSAQSSKSDSLQAEPRPGE. Residues 7-16 show a composition bias toward polar residues; sequence SAQSSKSDSL. 84-91 is an ATP binding site; that stretch reads GPESSGKT.

Belongs to the RecA family.

It is found in the cytoplasm. In terms of biological role, can catalyze the hydrolysis of ATP in the presence of single-stranded DNA, the ATP-dependent uptake of single-stranded DNA by duplex DNA, and the ATP-dependent hybridization of homologous single-stranded DNAs. It interacts with LexA causing its activation and leading to its autocatalytic cleavage. The protein is Protein RecA of Prochlorococcus marinus (strain MIT 9303).